Consider the following 325-residue polypeptide: Acetyl-coenzyme A carboxylase carboxyl transferase subunit alpha (325 aa).

In terms of domain architecture, CoA carboxyltransferase C-terminal spans 44–298 (QLEGRAEQLR…KTAILSNLEE (255 aa)).

Belongs to the AccA family. In terms of assembly, acetyl-CoA carboxylase is a heterohexamer composed of biotin carboxyl carrier protein (AccB), biotin carboxylase (AccC) and two subunits each of ACCase subunit alpha (AccA) and ACCase subunit beta (AccD).

It localises to the cytoplasm. It catalyses the reaction N(6)-carboxybiotinyl-L-lysyl-[protein] + acetyl-CoA = N(6)-biotinyl-L-lysyl-[protein] + malonyl-CoA. It participates in lipid metabolism; malonyl-CoA biosynthesis; malonyl-CoA from acetyl-CoA: step 1/1. In terms of biological role, component of the acetyl coenzyme A carboxylase (ACC) complex. First, biotin carboxylase catalyzes the carboxylation of biotin on its carrier protein (BCCP) and then the CO(2) group is transferred by the carboxyltransferase to acetyl-CoA to form malonyl-CoA. This chain is Acetyl-coenzyme A carboxylase carboxyl transferase subunit alpha, found in Acaryochloris marina (strain MBIC 11017).